The primary structure comprises 461 residues: Anthocyanidin 3-O-glucoside 5-O-glucosyltransferase (461 aa).

A signal peptide spans 1–15 (MSRAHVLLATFPAQG). H16 serves as the catalytic Proton acceptor. H16 provides a ligand contact to an anthocyanidin. Q338, H353, W356, N357, S358, E361, D377, and Q378 together coordinate UDP-alpha-D-glucose.

Belongs to the UDP-glycosyltransferase family.

It catalyses the reaction an anthocyanidin 3-O-beta-D-glucoside + UDP-alpha-D-glucose = an anthocyanidin 3,5-di-O-beta-D-glucoside + UDP + 2 H(+). The protein operates within pigment biosynthesis; anthocyanin biosynthesis. Its function is as follows. Catalyzes the glucosylation at the O-5 position of anthocyanidin 3-glucosides to form anthocyanidin 3,5-di-O-glucosides using UDP-glucose as sugar donor. Anthocyanidin 3,5-di-O-glucosides are molecules that are responsible for pigmentation. Also acts on anthocyanidin 3-O-(6-O-malonylglucoside). Much less active with hydroxycinnamoylglucose derivatives. No activity in the absence of the 3-O-glucoside group. The polypeptide is Anthocyanidin 3-O-glucoside 5-O-glucosyltransferase (HGT8) (Verbena hybrida (Garden vervain)).